A 386-amino-acid chain; its full sequence is Mannitol-1-phosphate 5-dehydrogenase (386 aa).

6–17 is a binding site for NAD(+); sequence AIHFGGGNIGRG. Lys-214 is a catalytic residue.

It belongs to the mannitol dehydrogenase family. Monomer.

It catalyses the reaction D-mannitol 1-phosphate + NAD(+) = beta-D-fructose 6-phosphate + NADH + H(+). In terms of biological role, catalyzes the NAD(H)-dependent interconversion of D-fructose 6-phosphate and D-mannitol 1-phosphate in the mannitol metabolic pathway. Plays a key role in liamocins biosynthesis by providing the mannitol moity that is linked to 3,5-dihydroxydecanoic acid (provided by the HR-PKS PKS1) via ester bond formation catalyzed by the esterase EST1. The polypeptide is Mannitol-1-phosphate 5-dehydrogenase (Aureobasidium melanogenum (Aureobasidium pullulans var. melanogenum)).